Reading from the N-terminus, the 483-residue chain is Essential nuclear protein 1 (483 aa).

4 disordered regions span residues 1 to 21 (MARA…LKDL), 33 to 55 (KKKL…GYID), 67 to 123 (KEQQ…EGDY), and 171 to 200 (ESQV…GLKS). The segment covering 96 to 123 (YDDEDEDEDEDEEAFGEDISDFEPEGDY) has biased composition (acidic residues). Ser-172 carries the phosphoserine; by ATM or ATR modification. Acidic residues predominate over residues 174–183 (VEDMQDDEPL). Polar residues predominate over residues 185–198 (NEQNTSRGNISSGL). 2 positions are modified to phosphoserine: Ser-190 and Ser-404.

This sequence belongs to the bystin family.

It is found in the cytoplasm. Its subcellular location is the nucleus. The protein resides in the nucleolus. Its function is as follows. Required for normal export of the pre-40S particles from the nucleus to the cytoplasm. Its subcellular location and association with pre-40S subunit shifts from mixed cytoplasm/nucleus to all nuclear in RPS19 disruptions, suggesting it acts after the ribosomal protein. This is Essential nuclear protein 1 (ENP1) from Saccharomyces cerevisiae (strain ATCC 204508 / S288c) (Baker's yeast).